Reading from the N-terminus, the 348-residue chain is ATPase GET3 (348 aa).

26–33 (KGGVGKTT) provides a ligand contact to ATP. Residue Asp57 is part of the active site. Glu241 and Asn268 together coordinate ATP. Cys280 and Cys283 together coordinate Zn(2+). An ATP-binding site is contributed by 310–312 (PLL).

The protein belongs to the arsA ATPase family. In terms of assembly, homodimer. Component of the Golgi to ER traffic (GET) complex, which is composed of GET1, GET2 and GET3. Within the complex, GET1 and GET2 form a heterotetramer which is stabilized by phosphatidylinositol binding and which binds to the GET3 homodimer. Interacts with the chloride channel protein GEF1.

It localises to the cytoplasm. The protein localises to the endoplasmic reticulum. It is found in the golgi apparatus. In terms of biological role, ATPase required for the post-translational delivery of tail-anchored (TA) proteins to the endoplasmic reticulum. Recognizes and selectively binds the transmembrane domain of TA proteins in the cytosol. This complex then targets to the endoplasmic reticulum by membrane-bound receptors GET1 and GET2, where the tail-anchored protein is released for insertion. This process is regulated by ATP binding and hydrolysis. ATP binding drives the homodimer towards the closed dimer state, facilitating recognition of newly synthesized TA membrane proteins. ATP hydrolysis is required for insertion. Subsequently, the homodimer reverts towards the open dimer state, lowering its affinity for the GET1-GET2 receptor, and returning it to the cytosol to initiate a new round of targeting. Cooperates with the HDEL receptor ERD2 to mediate the ATP-dependent retrieval of resident ER proteins that contain a C-terminal H-D-E-L retention signal from the Golgi to the ER. Involved in low-level resistance to the oxyanions arsenite and arsenate, and in heat tolerance. The polypeptide is ATPase GET3 (Debaryomyces hansenii (strain ATCC 36239 / CBS 767 / BCRC 21394 / JCM 1990 / NBRC 0083 / IGC 2968) (Yeast)).